Consider the following 306-residue polypeptide: Protoheme IX farnesyltransferase (306 aa).

The next 8 membrane-spanning stretches (helical) occupy residues 31-50 (VIELLLVTTAPVMILAQGGW), 55-77 (LILGVLVGGTLSAGSANAFNCYI), 104-124 (LVFAWIIGVASIVWLGVISNW), 125-145 (LAAALSLAAILFYVFVYTLWL), 168-188 (WAAVTGDISWAPVILFMIVFL), 218-235 (GRAAVGLQTILYAWATLA), 238-258 (LLLIPVAGMGLVYTLAALAGG), and 286-306 (ASISYLSLLFLAVGIDPLLPF).

Belongs to the UbiA prenyltransferase family. Protoheme IX farnesyltransferase subfamily.

It localises to the cell membrane. It catalyses the reaction heme b + (2E,6E)-farnesyl diphosphate + H2O = Fe(II)-heme o + diphosphate. It participates in porphyrin-containing compound metabolism; heme O biosynthesis; heme O from protoheme: step 1/1. In terms of biological role, converts heme B (protoheme IX) to heme O by substitution of the vinyl group on carbon 2 of heme B porphyrin ring with a hydroxyethyl farnesyl side group. The protein is Protoheme IX farnesyltransferase of Clavibacter michiganensis subsp. michiganensis (strain NCPPB 382).